The chain runs to 357 residues: Adenosine deaminase (357 aa).

Zn(2+)-binding residues include His-16 and His-18. Substrate contacts are provided by His-18, Asp-20, and Gly-185. Residue His-212 coordinates Zn(2+). The active-site Proton donor is the Glu-215. A Zn(2+)-binding site is contributed by Asp-294. A substrate-binding site is contributed by Asp-295.

Belongs to the metallo-dependent hydrolases superfamily. Adenosine and AMP deaminases family. The cofactor is Zn(2+).

Its subcellular location is the cell membrane. The protein localises to the cell junction. It is found in the cytoplasmic vesicle lumen. The protein resides in the cytoplasm. It localises to the lysosome. It catalyses the reaction adenosine + H2O + H(+) = inosine + NH4(+). The enzyme catalyses 2'-deoxyadenosine + H2O + H(+) = 2'-deoxyinosine + NH4(+). Catalyzes the hydrolytic deamination of adenosine and 2-deoxyadenosine. Plays an important role in purine metabolism and in adenosine homeostasis. Modulates signaling by extracellular adenosine, and so contributes indirectly to cellular signaling events. May act as a positive regulator of T-cell coactivation. This is Adenosine deaminase (ADA) from Gallus gallus (Chicken).